A 269-amino-acid chain; its full sequence is Activator of basal transcription 1 (269 aa).

Residues 1 to 40 (MVKAGELVEQQKAAMEEEANAEAAEDQEEPEDTACSSSSK) form a disordered region. Residues 5–29 (GELVEQQKAAMEEEANAEAAEDQEE) adopt a coiled-coil conformation. The segment covering 16–32 (EEEANAEAAEDQEEPED) has biased composition (acidic residues). The RRM domain occupies 48 to 145 (GIVYLGHVPP…RKRSPFRYDL (98 aa)). The stretch at 164-194 (AFERQVRRQRLRAEVAQAKRETDFYLRNVEQ) forms a coiled coil. The tract at residues 220–244 (EQEFRARKAARPGGRERARLANVED) is disordered.

It belongs to the ESF2/ABP1 family. Interacts with ESF1/ABTAP. Interacts with IGHMBP2. In terms of tissue distribution, ubiquitously expressed.

It is found in the nucleus. Its subcellular location is the nucleolus. Its function is as follows. Could be a novel TATA-binding protein (TBP) which can function as a basal transcription activator. Can act as a regulator of basal transcription for class II genes. In Mus musculus (Mouse), this protein is Activator of basal transcription 1 (Abt1).